The chain runs to 103 residues: Nematocin (103 aa).

Positions 1–19 are cleaved as a signal peptide; the sequence is MGSSPILLVLAISIGLASA. Cysteines 20 and 25 form a disulfide. Tyrosine amide is present on Y30. The propeptide occupies 31–103; that stretch reads GRTIRCSSCG…QGGCQTSAMC (73 aa).

It belongs to the vasopressin/oxytocin family. Detected in thermosensory AFD neurons, neurosecretory NSM cells, AVK interneurons, pharyngeal neuron M5, and the mechanosensory DVA neuron. Detected in male-specific CP motor neurons.

The protein localises to the secreted. Its function is as follows. Ligand for the G-protein coupled receptor ntr-1. Plays a role in gustatory associative learning. Also plays a role in male mating behavior. In Caenorhabditis elegans, this protein is Nematocin.